Consider the following 73-residue polypeptide: Photosystem I reaction center subunit IV (73 aa).

Belongs to the PsaE family.

Its subcellular location is the cellular thylakoid membrane. Stabilizes the interaction between PsaC and the PSI core, assists the docking of the ferredoxin to PSI and interacts with ferredoxin-NADP oxidoreductase. In Synechococcus sp. (strain JA-3-3Ab) (Cyanobacteria bacterium Yellowstone A-Prime), this protein is Photosystem I reaction center subunit IV.